Reading from the N-terminus, the 279-residue chain is Troponin T, fast skeletal muscle (279 aa).

Positions 1–21 are enriched in acidic residues; that stretch reads MSDEEVEHVEEQYEEEEEAQE. The disordered stretch occupies residues 1–82; it reads MSDEEVEHVE…EKVDFDDIQK (82 aa). N-acetylserine is present on serine 2. Position 2 is a phosphoserine (serine 2). 2 stretches are compositionally biased toward basic and acidic residues: residues 28–49 and 70–82; these read EVHE…ALED and PEGE…DIQK. Serine 98 carries the post-translational modification Phosphoserine. A compositionally biased stretch (basic and acidic residues) spans 121–163; it reads RAERAEQQRIRAEKERERQNRLAEEKARREEEDAKRRAEEDLK. The segment at 121 to 200 is disordered; the sequence is RAERAEQQRI…TAREMKKKIL (80 aa). A phosphoserine mark is found at serine 169, serine 176, and serine 177. A compositionally biased stretch (basic and acidic residues) spans 191 to 200; it reads TAREMKKKIL. At serine 213 the chain carries Phosphoserine. Tyrosine 229 is subject to Phosphotyrosine.

The protein belongs to the troponin T family.

Its function is as follows. Troponin T is the tropomyosin-binding subunit of troponin, the thin filament regulatory complex which confers calcium-sensitivity to striated muscle actomyosin ATPase activity. The polypeptide is Troponin T, fast skeletal muscle (TNNT3) (Oryctolagus cuniculus (Rabbit)).